Consider the following 469-residue polypeptide: Aspartyl/glutamyl-tRNA(Asn/Gln) amidotransferase subunit B (469 aa).

This sequence belongs to the GatB/GatE family. GatB subfamily. Heterotrimer of A, B and C subunits.

The catalysed reaction is L-glutamyl-tRNA(Gln) + L-glutamine + ATP + H2O = L-glutaminyl-tRNA(Gln) + L-glutamate + ADP + phosphate + H(+). It catalyses the reaction L-aspartyl-tRNA(Asn) + L-glutamine + ATP + H2O = L-asparaginyl-tRNA(Asn) + L-glutamate + ADP + phosphate + 2 H(+). Allows the formation of correctly charged Asn-tRNA(Asn) or Gln-tRNA(Gln) through the transamidation of misacylated Asp-tRNA(Asn) or Glu-tRNA(Gln) in organisms which lack either or both of asparaginyl-tRNA or glutaminyl-tRNA synthetases. The reaction takes place in the presence of glutamine and ATP through an activated phospho-Asp-tRNA(Asn) or phospho-Glu-tRNA(Gln). The protein is Aspartyl/glutamyl-tRNA(Asn/Gln) amidotransferase subunit B of Methanococcus aeolicus (strain ATCC BAA-1280 / DSM 17508 / OCM 812 / Nankai-3).